Here is a 105-residue protein sequence, read N- to C-terminus: Ig lambda chain C region (105 aa).

The 95-residue stretch at Pro6–Ala100 folds into the Ig-like domain. Cys27 and Cys86 are joined by a disulfide.

This is Ig lambda chain C region from Oryctolagus cuniculus (Rabbit).